The following is a 295-amino-acid chain: 4-hydroxy-tetrahydrodipicolinate synthase (295 aa).

Thr47 lines the pyruvate pocket. The active-site Proton donor/acceptor is the Tyr135. Lys163 (schiff-base intermediate with substrate) is an active-site residue. Ile206 serves as a coordination point for pyruvate.

This sequence belongs to the DapA family. Homodimer.

The protein localises to the cytoplasm. The catalysed reaction is L-aspartate 4-semialdehyde + pyruvate = (2S,4S)-4-hydroxy-2,3,4,5-tetrahydrodipicolinate + H2O + H(+). It participates in amino-acid biosynthesis; L-lysine biosynthesis via DAP pathway; (S)-tetrahydrodipicolinate from L-aspartate: step 3/4. Functionally, catalyzes the condensation of (S)-aspartate-beta-semialdehyde [(S)-ASA] and pyruvate to 4-hydroxy-tetrahydrodipicolinate (HTPA). The chain is 4-hydroxy-tetrahydrodipicolinate synthase from Staphylococcus aureus (strain Mu50 / ATCC 700699).